The sequence spans 242 residues: Uridylate kinase (242 aa).

12–15 is an ATP binding site; it reads KLSG. Residues 20–25 are involved in allosteric activation by GTP; that stretch reads GEKGYG. Glycine 55 contacts UMP. The ATP site is built by glycine 56 and arginine 60. UMP-binding positions include aspartate 75 and 136 to 143; that span reads TGNPYFST. Positions 169 and 172 each coordinate ATP.

The protein belongs to the UMP kinase family. In terms of assembly, homohexamer.

It localises to the cytoplasm. It catalyses the reaction UMP + ATP = UDP + ADP. Its pathway is pyrimidine metabolism; CTP biosynthesis via de novo pathway; UDP from UMP (UMPK route): step 1/1. Its activity is regulated as follows. Allosterically activated by GTP. Inhibited by UTP. Catalyzes the reversible phosphorylation of UMP to UDP. The polypeptide is Uridylate kinase (Carboxydothermus hydrogenoformans (strain ATCC BAA-161 / DSM 6008 / Z-2901)).